Here is a 416-residue protein sequence, read N- to C-terminus: Serine hydroxymethyltransferase (416 aa).

Residues L121 and 125–127 (GHL) each bind (6S)-5,6,7,8-tetrahydrofolate. K229 carries the N6-(pyridoxal phosphate)lysine modification.

The protein belongs to the SHMT family. In terms of assembly, homodimer. Pyridoxal 5'-phosphate serves as cofactor.

The protein localises to the cytoplasm. The enzyme catalyses (6R)-5,10-methylene-5,6,7,8-tetrahydrofolate + glycine + H2O = (6S)-5,6,7,8-tetrahydrofolate + L-serine. The protein operates within one-carbon metabolism; tetrahydrofolate interconversion. Its pathway is amino-acid biosynthesis; glycine biosynthesis; glycine from L-serine: step 1/1. In terms of biological role, catalyzes the reversible interconversion of serine and glycine with tetrahydrofolate (THF) serving as the one-carbon carrier. This reaction serves as the major source of one-carbon groups required for the biosynthesis of purines, thymidylate, methionine, and other important biomolecules. Also exhibits THF-independent aldolase activity toward beta-hydroxyamino acids, producing glycine and aldehydes, via a retro-aldol mechanism. This is Serine hydroxymethyltransferase from Dechloromonas aromatica (strain RCB).